The chain runs to 179 residues: MTQKVGVLAIQGGYQKHADMFKSLGVEVKLVKFNNDFDSIDRLVIPGGESTTLLNLLNKHQIFDKLYNFCSSKPVFGTCAGSIILSKGEGYLNLLDLEVQRNAYGRQVDSFVADISFNDKNITGVFIRAPKFIVVGNQVDILSKYQNSPVLLRQANILVSSFHPELTQDPTVHEYFLAM.

Gly-48 to Ser-50 serves as a coordination point for L-glutamine. Residue Cys-79 is the Nucleophile of the active site. Residues Arg-101 and Ile-127–Arg-128 contribute to the L-glutamine site. Active-site charge relay system residues include His-163 and Glu-165.

Belongs to the glutaminase PdxT/SNO family. In the presence of PdxS, forms a dodecamer of heterodimers. Only shows activity in the heterodimer.

It carries out the reaction aldehydo-D-ribose 5-phosphate + D-glyceraldehyde 3-phosphate + L-glutamine = pyridoxal 5'-phosphate + L-glutamate + phosphate + 3 H2O + H(+). The catalysed reaction is L-glutamine + H2O = L-glutamate + NH4(+). The protein operates within cofactor biosynthesis; pyridoxal 5'-phosphate biosynthesis. In terms of biological role, catalyzes the hydrolysis of glutamine to glutamate and ammonia as part of the biosynthesis of pyridoxal 5'-phosphate. The resulting ammonia molecule is channeled to the active site of PdxS. The polypeptide is Pyridoxal 5'-phosphate synthase subunit PdxT (Francisella tularensis subsp. holarctica (strain FTNF002-00 / FTA)).